The sequence spans 201 residues: Glutathione peroxidase 1 (201 aa).

Serine 32 is modified (phosphoserine). Selenocysteine 47 is a catalytic residue. A non-standard amino acid (selenocysteine) is located at residue selenocysteine 47. 2 positions are modified to N6-acetyllysine; alternate: lysine 86 and lysine 112. Residues lysine 86 and lysine 112 each carry the N6-succinyllysine; alternate modification. Lysine 119 bears the N6-acetyllysine mark. The residue at position 146 (lysine 146) is an N6-acetyllysine; alternate. N6-succinyllysine; alternate is present on lysine 146. Phosphoserine is present on residues serine 195 and serine 199.

It belongs to the glutathione peroxidase family. As to quaternary structure, homotetramer. Interacts with MIEN1. In terms of processing, during periods of oxidative stress, Sec-47 may react with a superoxide radical, irreversibly lose hydroselenide and be converted to dehydroalanine. In terms of tissue distribution, expressed in liver and lung.

It is found in the cytoplasm. The protein resides in the mitochondrion. The enzyme catalyses 2 glutathione + H2O2 = glutathione disulfide + 2 H2O. It carries out the reaction a hydroperoxy polyunsaturated fatty acid + 2 glutathione = a hydroxy polyunsaturated fatty acid + glutathione disulfide + H2O. It catalyses the reaction tert-butyl hydroperoxide + 2 glutathione = tert-butanol + glutathione disulfide + H2O. The catalysed reaction is cumene hydroperoxide + 2 glutathione = 2-phenylpropan-2-ol + glutathione disulfide + H2O. The enzyme catalyses (13S)-hydroperoxy-(9Z,11E)-octadecadienoate + 2 glutathione = (13S)-hydroxy-(9Z,11E)-octadecadienoate + glutathione disulfide + H2O. It carries out the reaction (9S)-hydroperoxy-(10E,12Z)-octadecadienoate + 2 glutathione = (9S)-hydroxy-(10E,12Z)-octadecadienoate + glutathione disulfide + H2O. It catalyses the reaction (5S)-hydroperoxy-(6E,8Z,11Z,14Z)-eicosatetraenoate + 2 glutathione = (5S)-hydroxy-(6E,8Z,11Z,14Z)-eicosatetraenoate + glutathione disulfide + H2O. The catalysed reaction is (12S)-hydroperoxy-(5Z,8Z,10E,14Z)-eicosatetraenoate + 2 glutathione = (12S)-hydroxy-(5Z,8Z,10E,14Z)-eicosatetraenoate + glutathione disulfide + H2O. The enzyme catalyses (12R)-hydroperoxy-(5Z,8Z,10E,14Z)-eicosatetraenoate + 2 glutathione = (12R)-hydroxy-(5Z,8Z,10E,14Z)-eicosatetraenoate + glutathione disulfide + H2O. It carries out the reaction (15S)-hydroperoxy-(5Z,8Z,11Z,13E)-eicosatetraenoate + 2 glutathione = (15S)-hydroxy-(5Z,8Z,11Z,13E)-eicosatetraenoate + glutathione disulfide + H2O. It catalyses the reaction (5S)-hydroperoxy-(6E,8Z,11Z,14Z,17Z)-eicosapentaenoate + 2 glutathione = (5S)-hydroxy-(6E,8Z,11Z,14Z,17Z)-eicosapentaenoate + glutathione disulfide + H2O. The catalysed reaction is (12S)-hydroperoxy-(5Z,8Z,10E,14Z,17Z)-eicosapentaenoate + 2 glutathione = (12S)-hydroxy-(5Z,8Z,10E,14Z,17Z)-eicosapentaenoate + glutathione disulfide + H2O. The enzyme catalyses (15S)-hydroperoxy-(5Z,8Z,11Z,13E,17Z)-eicosapentaenoate + 2 glutathione = (15S)-hydroxy-(5Z,8Z,11Z,13E,17Z)-eicosapentaenoate + glutathione disulfide + H2O. It carries out the reaction (15S)-hydroperoxy-(11Z,13E)-eicosadienoate + 2 glutathione = (15S)-hydroxy-(11Z,13E)-eicosadienoate + glutathione disulfide + H2O. It catalyses the reaction (17S)-hydroperoxy-(4Z,7Z,10Z,13Z,15E,19Z)-docosahexaenoate + 2 glutathione = (17S)-hydroxy-(4Z,7Z,10Z,13Z,15E,19Z)-docosahexaenoate + glutathione disulfide + H2O. Catalyzes the reduction of hydroperoxides in a glutathione-dependent manner thus regulating cellular redox homeostasis. Can reduce small soluble hydroperoxides such as H2O2, cumene hydroperoxide and tert-butyl hydroperoxide, as well as several fatty acid-derived hydroperoxides. In platelets catalyzes the reduction of 12-hydroperoxyeicosatetraenoic acid, the primary product of the arachidonate 12-lipoxygenase pathway. This Rattus norvegicus (Rat) protein is Glutathione peroxidase 1.